The following is an 83-amino-acid chain: Cytochrome c oxidase subunit 7A2, mitochondrial (83 aa).

Residues 1–23 constitute a mitochondrion transit peptide; the sequence is MLRNLLALRQIAQRTISTTSRRH. Residues 24-48 lie on the Mitochondrial matrix side of the membrane; sequence FENKVPEKQKLFQEDNGMPVHLKGG. Lys-33 bears the N6-acetyllysine mark. Residues 49–77 traverse the membrane as a helical segment; that stretch reads ASDALLYRATMALTLGGTAYAIYLLAMAA. Over 78–83 the chain is Mitochondrial intermembrane; sequence FPKKQN.

This sequence belongs to the cytochrome c oxidase VIIa family. In terms of assembly, component of the cytochrome c oxidase (complex IV, CIV), a multisubunit enzyme composed of 14 subunits. The complex is composed of a catalytic core of 3 subunits MT-CO1, MT-CO2 and MT-CO3, encoded in the mitochondrial DNA, and 11 supernumerary subunits COX4I, COX5A, COX5B, COX6A, COX6B, COX6C, COX7A, COX7B, COX7C, COX8 and NDUFA4, which are encoded in the nuclear genome. The complex exists as a monomer or a dimer and forms supercomplexes (SCs) in the inner mitochondrial membrane with NADH-ubiquinone oxidoreductase (complex I, CI) and ubiquinol-cytochrome c oxidoreductase (cytochrome b-c1 complex, complex III, CIII), resulting in different assemblies (supercomplex SCI(1)III(2)IV(1) and megacomplex MCI(2)III(2)IV(2)). Interacts with PET100.

The protein resides in the mitochondrion inner membrane. It functions in the pathway energy metabolism; oxidative phosphorylation. In terms of biological role, component of the cytochrome c oxidase, the last enzyme in the mitochondrial electron transport chain which drives oxidative phosphorylation. The respiratory chain contains 3 multisubunit complexes succinate dehydrogenase (complex II, CII), ubiquinol-cytochrome c oxidoreductase (cytochrome b-c1 complex, complex III, CIII) and cytochrome c oxidase (complex IV, CIV), that cooperate to transfer electrons derived from NADH and succinate to molecular oxygen, creating an electrochemical gradient over the inner membrane that drives transmembrane transport and the ATP synthase. Cytochrome c oxidase is the component of the respiratory chain that catalyzes the reduction of oxygen to water. Electrons originating from reduced cytochrome c in the intermembrane space (IMS) are transferred via the dinuclear copper A center (CU(A)) of subunit 2 and heme A of subunit 1 to the active site in subunit 1, a binuclear center (BNC) formed by heme A3 and copper B (CU(B)). The BNC reduces molecular oxygen to 2 water molecules using 4 electrons from cytochrome c in the IMS and 4 protons from the mitochondrial matrix. In Mus musculus (Mouse), this protein is Cytochrome c oxidase subunit 7A2, mitochondrial (Cox7a2).